A 192-amino-acid polypeptide reads, in one-letter code: Peptidyl-tRNA hydrolase (192 aa).

His17 contributes to the tRNA binding site. His22 (proton acceptor) is an active-site residue. TRNA-binding residues include Phe68, Asn70, and Asn116.

This sequence belongs to the PTH family. In terms of assembly, monomer.

It is found in the cytoplasm. The enzyme catalyses an N-acyl-L-alpha-aminoacyl-tRNA + H2O = an N-acyl-L-amino acid + a tRNA + H(+). Functionally, hydrolyzes ribosome-free peptidyl-tRNAs (with 1 or more amino acids incorporated), which drop off the ribosome during protein synthesis, or as a result of ribosome stalling. Catalyzes the release of premature peptidyl moieties from peptidyl-tRNA molecules trapped in stalled 50S ribosomal subunits, and thus maintains levels of free tRNAs and 50S ribosomes. This chain is Peptidyl-tRNA hydrolase, found in Stenotrophomonas maltophilia (strain R551-3).